The chain runs to 74 residues: Toxin BmKaTx17 (74 aa).

The N-terminal stretch at 1–8 (LLMTGVES) is a signal peptide. The LCN-type CS-alpha/beta domain maps to 10–72 (RDAYIAKNYN…KPIRIPGKCH (63 aa)). 4 cysteine pairs are disulfide-bonded: cysteine 20-cysteine 71, cysteine 24-cysteine 44, cysteine 30-cysteine 54, and cysteine 34-cysteine 56. The propeptide at 73–74 (RR) is removed by a carboxypeptidase.

The protein belongs to the long (4 C-C) scorpion toxin superfamily. Sodium channel inhibitor family. Alpha subfamily. In terms of tissue distribution, expressed by the venom gland.

The protein resides in the secreted. Alpha toxins bind voltage-independently at site-3 of sodium channels (Nav) and inhibit the inactivation of the activated channels, thereby blocking neuronal transmission. This chain is Toxin BmKaTx17, found in Olivierus martensii (Manchurian scorpion).